The following is a 258-amino-acid chain: Deoxyribose-phosphate aldolase (258 aa).

Residue aspartate 102 is the Proton donor/acceptor of the active site. The active-site Schiff-base intermediate with acetaldehyde is lysine 165. The active-site Proton donor/acceptor is lysine 199.

This sequence belongs to the DeoC/FbaB aldolase family. DeoC type 2 subfamily.

Its subcellular location is the cytoplasm. It catalyses the reaction 2-deoxy-D-ribose 5-phosphate = D-glyceraldehyde 3-phosphate + acetaldehyde. It participates in carbohydrate degradation; 2-deoxy-D-ribose 1-phosphate degradation; D-glyceraldehyde 3-phosphate and acetaldehyde from 2-deoxy-alpha-D-ribose 1-phosphate: step 2/2. Functionally, catalyzes a reversible aldol reaction between acetaldehyde and D-glyceraldehyde 3-phosphate to generate 2-deoxy-D-ribose 5-phosphate. This is Deoxyribose-phosphate aldolase from Vibrio parahaemolyticus serotype O3:K6 (strain RIMD 2210633).